A 127-amino-acid chain; its full sequence is Small ribosomal subunit protein bS6 (127 aa).

The segment covering 106–117 (ERKAQSEKKEAE) has biased composition (basic and acidic residues). A disordered region spans residues 106–127 (ERKAQSEKKEAEVSEGEGGTEA). Acidic residues predominate over residues 118–127 (VSEGEGGTEA).

It belongs to the bacterial ribosomal protein bS6 family.

Functionally, binds together with bS18 to 16S ribosomal RNA. In Thermotoga neapolitana (strain ATCC 49049 / DSM 4359 / NBRC 107923 / NS-E), this protein is Small ribosomal subunit protein bS6.